Here is a 618-residue protein sequence, read N- to C-terminus: COMPASS component cclA (618 aa).

Positions 1-91 (MSSIQPVGSS…KKAAVAPNSA (91 aa)) are disordered. Composition is skewed to low complexity over residues 8–19 (GSSGPSSNINSP) and 37–49 (NARS…SNAS). Basic residues predominate over residues 57 to 69 (SKRNKRDSRKKRE). The 212-residue stretch at 157-368 (IADPGFPHIK…QSNVFSTKHL (212 aa)) folds into the B30.2/SPRY domain. The disordered stretch occupies residues 588–618 (TLSVGHEGSPNPATPSAPLENTVPTEDVEMS).

This sequence belongs to the cclA family. In terms of assembly, component of the COMPASS complex.

The protein localises to the nucleus. The protein resides in the chromosome. Its subcellular location is the telomere. Functionally, component of the COMPASS (Set1C) complex that specifically mono-, di- and trimethylates histone H3 to form H3K4me1/2/3, which subsequently plays a role in telomere length maintenance and transcription elongation regulation. Controls the production of several secondary metabolites, including gliotoxin, but does not contribute to pathogenicity. This Aspergillus fumigatus (strain ATCC MYA-4609 / CBS 101355 / FGSC A1100 / Af293) (Neosartorya fumigata) protein is COMPASS component cclA.